Reading from the N-terminus, the 334-residue chain is MEQNSRALIDGFNRKIDYLRMSVTDRCDFRCVYCMAEDMQFLPRQQILSLEELFQVAERFVALGTRKIRLTGGEPLVRQGIVDLCGRIAALPGLRELCLTSNGSQLGRLAQPLFDAGVTRLNISLDSLDADRFKQLTRTGDLAQVIAGIDAARQAGFKRTKLNCVVLKGRNDHELVDLVRFAIERELDITFIEEMPLGVISEHERGESFCSSDEVRARLAEQFTLVESTESSMGPARYWRLAEAANTRVGFISPHSHNFCATCNRVRLTVEGRLLLCLGNEHSVDLKHVLRAHPGNPERLEKAIRDSLHLKPYRHHFEVGGDVQILRFMNMTGG.

Residues 11 to 236 enclose the Radical SAM core domain; that stretch reads GFNRKIDYLR…ESTESSMGPA (226 aa). Arg20 lines the GTP pocket. [4Fe-4S] cluster is bound by residues Cys27 and Cys31. Tyr33 contributes to the S-adenosyl-L-methionine binding site. Cys34 serves as a coordination point for [4Fe-4S] cluster. Residue Arg69 participates in GTP binding. Gly73 provides a ligand contact to S-adenosyl-L-methionine. Position 100 (Thr100) interacts with GTP. Ser124 lines the S-adenosyl-L-methionine pocket. A GTP-binding site is contributed by Lys161. Met195 provides a ligand contact to S-adenosyl-L-methionine. [4Fe-4S] cluster contacts are provided by Cys260 and Cys263. 265–267 lines the GTP pocket; that stretch reads RVR. Cys277 lines the [4Fe-4S] cluster pocket.

The protein belongs to the radical SAM superfamily. MoaA family. As to quaternary structure, monomer and homodimer. [4Fe-4S] cluster serves as cofactor.

The enzyme catalyses GTP + AH2 + S-adenosyl-L-methionine = (8S)-3',8-cyclo-7,8-dihydroguanosine 5'-triphosphate + 5'-deoxyadenosine + L-methionine + A + H(+). It functions in the pathway cofactor biosynthesis; molybdopterin biosynthesis. In terms of biological role, catalyzes the cyclization of GTP to (8S)-3',8-cyclo-7,8-dihydroguanosine 5'-triphosphate. The chain is GTP 3',8-cyclase from Pseudomonas putida (strain ATCC 47054 / DSM 6125 / CFBP 8728 / NCIMB 11950 / KT2440).